Reading from the N-terminus, the 395-residue chain is S-adenosylmethionine synthase (395 aa).

Histidine 15 contacts ATP. A Mg(2+)-binding site is contributed by aspartate 17. Residue glutamate 43 coordinates K(+). L-methionine contacts are provided by glutamate 56 and glutamine 99. Positions 99-109 are flexible loop; sequence QSPEIAQGVDR. Residues 164–166, 230–231, aspartate 239, 245–246, alanine 262, and lysine 266 each bind ATP; these read DAK, RF, and RK. Residue aspartate 239 coordinates L-methionine. Lysine 270 contacts L-methionine.

This sequence belongs to the AdoMet synthase family. Homotetramer; dimer of dimers. The cofactor is Mg(2+). It depends on K(+) as a cofactor.

The protein localises to the cytoplasm. The enzyme catalyses L-methionine + ATP + H2O = S-adenosyl-L-methionine + phosphate + diphosphate. It participates in amino-acid biosynthesis; S-adenosyl-L-methionine biosynthesis; S-adenosyl-L-methionine from L-methionine: step 1/1. In terms of biological role, catalyzes the formation of S-adenosylmethionine (AdoMet) from methionine and ATP. The overall synthetic reaction is composed of two sequential steps, AdoMet formation and the subsequent tripolyphosphate hydrolysis which occurs prior to release of AdoMet from the enzyme. The polypeptide is S-adenosylmethionine synthase (Colwellia psychrerythraea (strain 34H / ATCC BAA-681) (Vibrio psychroerythus)).